We begin with the raw amino-acid sequence, 200 residues long: High frequency lysogenization protein HflD homolog (200 aa).

This sequence belongs to the HflD family.

It is found in the cytoplasm. The protein localises to the cell inner membrane. In Pseudoalteromonas translucida (strain TAC 125), this protein is High frequency lysogenization protein HflD homolog.